Reading from the N-terminus, the 336-residue chain is Anthranilate phosphoribosyltransferase (336 aa).

Residues Gly79, 82 to 83, Thr87, 89 to 92, 107 to 115, and Ala119 each bind 5-phospho-alpha-D-ribose 1-diphosphate; these read GD, NIST, and KHGNRCVSS. Gly79 contributes to the anthranilate binding site. Ser91 contributes to the Mg(2+) binding site. An anthranilate-binding site is contributed by Asn110. Arg165 is an anthranilate binding site. Mg(2+) is bound by residues Asp224 and Glu225.

The protein belongs to the anthranilate phosphoribosyltransferase family. In terms of assembly, homodimer. Mg(2+) is required as a cofactor.

The enzyme catalyses N-(5-phospho-beta-D-ribosyl)anthranilate + diphosphate = 5-phospho-alpha-D-ribose 1-diphosphate + anthranilate. It functions in the pathway amino-acid biosynthesis; L-tryptophan biosynthesis; L-tryptophan from chorismate: step 2/5. In terms of biological role, catalyzes the transfer of the phosphoribosyl group of 5-phosphorylribose-1-pyrophosphate (PRPP) to anthranilate to yield N-(5'-phosphoribosyl)-anthranilate (PRA). This is Anthranilate phosphoribosyltransferase from Lachnoclostridium phytofermentans (strain ATCC 700394 / DSM 18823 / ISDg) (Clostridium phytofermentans).